A 1063-amino-acid chain; its full sequence is Lysine-specific demethylase phf2 (1063 aa).

The segment at 5–56 adopts a PHD-type zinc-finger fold; it reads PVYCICRLPYDVTQFMIECDACKDWFHGSCVGVDEDEAPDIDIYHCPNCEKT. In terms of domain architecture, JmjC spans 197–353; that stretch reads FSDARMANIV…MQMRAYEVEK (157 aa). A 2-oxoglutarate-binding site is contributed by threonine 246. 2 residues coordinate Fe cation: histidine 249 and glutamate 251. 2-oxoglutarate contacts are provided by tyrosine 259 and lysine 266. Fe cation is bound at residue asparagine 321. 4 disordered regions span residues 448–546, 704–761, 773–864, and 879–1045; these read VSDS…LAAL, NIKE…SAGI, GIDY…DMFD, and YVYP…MATA. Over residues 460–477 the composition is skewed to low complexity; that stretch reads SEPSNSKPPAEEPPSALS. 2 stretches are compositionally biased toward basic and acidic residues: residues 513 to 540 and 723 to 745; these read PPKE…EKKP and KSPD…DVKG. The span at 746–755 shows a compositional bias: basic residues; that stretch reads RNSKVSKKKG. The span at 776–791 shows a compositional bias: polar residues; it reads YSNNSQPPASPSTQEA. The segment covering 813-833 has biased composition (low complexity); that stretch reads SNSQAKNNSHSSAASKKPSGA. Over residues 842-852 the composition is skewed to basic residues; sequence RPAKRLPKKTQ. Residues 920 to 929 are compositionally biased toward basic and acidic residues; the sequence is RQERPAREGA. The span at 953–964 shows a compositional bias: basic residues; it reads IKKKKKSAKKKP. Positions 965–975 are enriched in basic and acidic residues; it reads IVAEESHKLSH. 2 stretches are compositionally biased toward low complexity: residues 976–988 and 1021–1031; these read DSSS…DSES and SSSSSSQNASS. Serine 1021 carries the phosphoserine; by PKA modification.

It belongs to the JHDM1 histone demethylase family. JHDM1D subfamily.

It is found in the nucleus. It localises to the nucleolus. The protein localises to the chromosome. Its subcellular location is the centromere. The protein resides in the kinetochore. Its function is as follows. Lysine demethylase that demethylates both histones and non-histone proteins. Mediates demethylation of dimethylated 'Lys-9' of histone H3 (H3K9me2). Recruited to trimethylated 'Lys-4' of histone H3 (H3K4me3) at rDNA promoters and promotes expression of rDNA. This chain is Lysine-specific demethylase phf2 (phf2), found in Danio rerio (Zebrafish).